Consider the following 365-residue polypeptide: MRVLAAMSGGVDSAVAASRAVAAGHEVVGVHLALSRDPQSVRESSRGCCSLEDSADARRVCDKLGIPFYVWDFSDRFKEDVIDDFIDSYAIGETPNPCLRCNEKIKFAALLERGIALGFDAVVTGHYARLTQPADGGDGYLRRGVDMNKDQSYVLGVLGAHEIAHCMFPVGDTVKPEIREEAAASGFSVAKKPDSYDICFIPDGNTQAFLGKHIGLRPGMIVDREGTTLREHAGVHEFTIGQRKGLDIKEPAADGRPRYVTDIDAATGTVTVGSREDLEVGVIHADRLKFLHPAMDGELDCEVQVRAHGGVVKCHARIDRTADTMRLDLAESLSGVARGQAAVLYLPDPEGDIVLGSGTICGTEA.

Residues 6-13 (AMSGGVDS) and leucine 32 each bind ATP. Residue cysteine 101 is the Nucleophile of the active site. Residues cysteine 101 and cysteine 199 are joined by a disulfide bond. Glycine 125 provides a ligand contact to ATP. Residues 149-151 (KDQ) are interaction with tRNA. The active-site Cysteine persulfide intermediate is cysteine 199.

The protein belongs to the MnmA/TRMU family.

The protein localises to the cytoplasm. It catalyses the reaction S-sulfanyl-L-cysteinyl-[protein] + uridine(34) in tRNA + AH2 + ATP = 2-thiouridine(34) in tRNA + L-cysteinyl-[protein] + A + AMP + diphosphate + H(+). Catalyzes the 2-thiolation of uridine at the wobble position (U34) of tRNA, leading to the formation of s(2)U34. This chain is tRNA-specific 2-thiouridylase MnmA, found in Corynebacterium efficiens (strain DSM 44549 / YS-314 / AJ 12310 / JCM 11189 / NBRC 100395).